Consider the following 190-residue polypeptide: Holliday junction branch migration complex subunit RuvA (190 aa).

Residues 1-64 (MIGRITGTLI…EDAHILYGFA (64 aa)) form a domain I region. The domain II stretch occupies residues 65 to 137 (TAAERGAFRE…MRGKLGADIG (73 aa)). The tract at residues 137–141 (GATAH) is flexible linker. A domain III region spans residues 142 to 190 (AVPDSQTDILNALLALGYSDKESQAALKKLPEGTGVSEGIRLALKALVR).

Belongs to the RuvA family. Homotetramer. Forms an RuvA(8)-RuvB(12)-Holliday junction (HJ) complex. HJ DNA is sandwiched between 2 RuvA tetramers; dsDNA enters through RuvA and exits via RuvB. An RuvB hexamer assembles on each DNA strand where it exits the tetramer. Each RuvB hexamer is contacted by two RuvA subunits (via domain III) on 2 adjacent RuvB subunits; this complex drives branch migration. In the full resolvosome a probable DNA-RuvA(4)-RuvB(12)-RuvC(2) complex forms which resolves the HJ.

It is found in the cytoplasm. In terms of biological role, the RuvA-RuvB-RuvC complex processes Holliday junction (HJ) DNA during genetic recombination and DNA repair, while the RuvA-RuvB complex plays an important role in the rescue of blocked DNA replication forks via replication fork reversal (RFR). RuvA specifically binds to HJ cruciform DNA, conferring on it an open structure. The RuvB hexamer acts as an ATP-dependent pump, pulling dsDNA into and through the RuvAB complex. HJ branch migration allows RuvC to scan DNA until it finds its consensus sequence, where it cleaves and resolves the cruciform DNA. The protein is Holliday junction branch migration complex subunit RuvA of Bordetella petrii (strain ATCC BAA-461 / DSM 12804 / CCUG 43448).